The chain runs to 858 residues: DNA mismatch repair protein MutS (858 aa).

Residue 637 to 644 participates in ATP binding; sequence GPNMAGKS.

It belongs to the DNA mismatch repair MutS family.

In terms of biological role, this protein is involved in the repair of mismatches in DNA. It is possible that it carries out the mismatch recognition step. This protein has a weak ATPase activity. The protein is DNA mismatch repair protein MutS of Protochlamydia amoebophila (strain UWE25).